The chain runs to 213 residues: Imidazole glycerol phosphate synthase subunit HisH (213 aa).

A Glutamine amidotransferase type-1 domain is found at 3–213; it reads MIGVIDYGMG…VGIVTGRENG (211 aa). Cysteine 81 serves as the catalytic Nucleophile. Residues histidine 188 and glutamate 190 contribute to the active site.

As to quaternary structure, heterodimer of HisH and HisF.

The protein resides in the cytoplasm. The catalysed reaction is 5-[(5-phospho-1-deoxy-D-ribulos-1-ylimino)methylamino]-1-(5-phospho-beta-D-ribosyl)imidazole-4-carboxamide + L-glutamine = D-erythro-1-(imidazol-4-yl)glycerol 3-phosphate + 5-amino-1-(5-phospho-beta-D-ribosyl)imidazole-4-carboxamide + L-glutamate + H(+). The enzyme catalyses L-glutamine + H2O = L-glutamate + NH4(+). It functions in the pathway amino-acid biosynthesis; L-histidine biosynthesis; L-histidine from 5-phospho-alpha-D-ribose 1-diphosphate: step 5/9. In terms of biological role, IGPS catalyzes the conversion of PRFAR and glutamine to IGP, AICAR and glutamate. The HisH subunit catalyzes the hydrolysis of glutamine to glutamate and ammonia as part of the synthesis of IGP and AICAR. The resulting ammonia molecule is channeled to the active site of HisF. The chain is Imidazole glycerol phosphate synthase subunit HisH from Geobacillus thermodenitrificans (strain NG80-2).